Consider the following 309-residue polypeptide: tRNA N6-adenosine threonylcarbamoyltransferase (309 aa).

Fe cation contacts are provided by H108 and H112. Substrate-binding positions include 130–134 (LVSGG), D163, G176, D180, and N269. A Fe cation-binding site is contributed by D293.

Belongs to the KAE1 / TsaD family. Fe(2+) serves as cofactor.

The protein resides in the cytoplasm. The enzyme catalyses L-threonylcarbamoyladenylate + adenosine(37) in tRNA = N(6)-L-threonylcarbamoyladenosine(37) in tRNA + AMP + H(+). Its function is as follows. Required for the formation of a threonylcarbamoyl group on adenosine at position 37 (t(6)A37) in tRNAs that read codons beginning with adenine. Is involved in the transfer of the threonylcarbamoyl moiety of threonylcarbamoyl-AMP (TC-AMP) to the N6 group of A37, together with TsaE and TsaB. TsaD likely plays a direct catalytic role in this reaction. The chain is tRNA N6-adenosine threonylcarbamoyltransferase from Mycoplasmopsis agalactiae (strain NCTC 10123 / CIP 59.7 / PG2) (Mycoplasma agalactiae).